Reading from the N-terminus, the 95-residue chain is Small ubiquitin-related modifier 4 (95 aa).

The 79-residue stretch at 17–95 (HINLKVAGQD…VFQQPTGGVY (79 aa)) folds into the Ubiquitin-like domain. G93 is covalently cross-linked (Glycyl lysine isopeptide (Gly-Lys) (interchain with K-? in acceptor proteins)). A propeptide spanning residues 94–95 (VY) is cleaved from the precursor.

The protein belongs to the ubiquitin family. SUMO subfamily. In terms of assembly, interacts with SAE2. Covalently attached to a number of proteins. In terms of processing, in contrast to SUMO1, SUMO2 and SUMO3, seems to be insensitive to sentrin-specific proteases due to the presence of Pro-90. This may impair processing to mature form and conjugation to substrates. Expressed mainly in adult and embryonic kidney. Expressed at various levels in immune tissues, with the highest expression in the lymph node and spleen.

In terms of biological role, ubiquitin-like protein which can be covalently attached to target lysines as a monomer. Does not seem to be involved in protein degradation and may modulate protein subcellular localization, stability or activity. Upon oxidative stress, conjugates to various anti-oxidant enzymes, chaperones, and stress defense proteins. May also conjugate to NFKBIA, TFAP2A and FOS, negatively regulating their transcriptional activity, and to NR3C1, positively regulating its transcriptional activity. Covalent attachment to its substrates requires prior activation by the E1 complex SAE1-SAE2 and linkage to the E2 enzyme UBE2I. The protein is Small ubiquitin-related modifier 4 (SUMO4) of Homo sapiens (Human).